A 504-amino-acid chain; its full sequence is Maturase K (504 aa).

The protein belongs to the intron maturase 2 family. MatK subfamily.

The protein resides in the plastid. It localises to the chloroplast. In terms of biological role, usually encoded in the trnK tRNA gene intron. Probably assists in splicing its own and other chloroplast group II introns. In Nepenthes alata (Winged pitcher plant), this protein is Maturase K.